The following is a 578-amino-acid chain: MIELAAIHHQPFNSDAYSYNGRTLHIKIRTKKDDAEHVAWFGAILTNTPAHMESERAYVAKIGRNKQPMITGLPKCGLHSGSAIRIYLTALMIETLFTEAMVHVRFRYRQTHVLNFRLFMRQTRLMHRLGQINRLVSNFSGAFRAGGKICSGKPLPWGRKDPEAHDFFGGHLQGIMTSWTIWKTWGEAGIYLTPIFAAPSNHKYDTLDYCSIDPHFGDEELFRTVVSRIHERGMKIMLDAVFNHIGTSQEWQDVVKNGETSRYKDWFIFILSLLKKAAMIHLRLVPRCRSSIAGTRKFRLICLILRCTGSANLISTAGVWMWQMKLIMRFGRNSGKPSPEKPDIFILGEIWHQADPWLRGDEFHIGHELPVHRTDDSLFFRRIDFSSQIASRINSQKMSGMKQVKEVMLNLLDSHERILTRCGGDQRKGARLFWHSCLLRQGRIYYPRKSGFTAAMIHCAGSAWFGKRKNRIKRCLAFMKPLIALRKQENDVLTYGALEWKLVDDQNDFVSFSRTHEGKELIYFFHQGREVRRVRLRDLKIASDKRIYDAWTEEALHDDDVVDIQPGDFSFLGRSKFC.

It belongs to the glycosyl hydrolase 13 family.

The enzyme catalyses hydrolysis of (1-&gt;4)-alpha-D-glucosidic linkages in polysaccharides so as to remove successive alpha-maltose residues from the non-reducing ends of the chains.. Its function is as follows. Converts starch into maltose. In contrary to other maltogenic alpha-amylases BlmA cannot hydrolyze 1,4-alpha-glucosidic linkage next to 1,6-alpha-glucosidic linkages. This chain is Maltogenic alpha-amylase (blmA), found in Bacillus licheniformis.